We begin with the raw amino-acid sequence, 663 residues long: Protein MNE1 (663 aa).

This is Protein MNE1 (MNE1) from Saccharomyces cerevisiae (strain ATCC 204508 / S288c) (Baker's yeast).